The primary structure comprises 160 residues: Crossover junction endodeoxyribonuclease RuvC (160 aa).

Catalysis depends on residues Asp-9, Glu-68, and Asp-141. Residues Asp-9, Glu-68, and Asp-141 each coordinate Mg(2+).

It belongs to the RuvC family. In terms of assembly, homodimer which binds Holliday junction (HJ) DNA. The HJ becomes 2-fold symmetrical on binding to RuvC with unstacked arms; it has a different conformation from HJ DNA in complex with RuvA. In the full resolvosome a probable DNA-RuvA(4)-RuvB(12)-RuvC(2) complex forms which resolves the HJ. Requires Mg(2+) as cofactor.

It localises to the cytoplasm. The enzyme catalyses Endonucleolytic cleavage at a junction such as a reciprocal single-stranded crossover between two homologous DNA duplexes (Holliday junction).. Its function is as follows. The RuvA-RuvB-RuvC complex processes Holliday junction (HJ) DNA during genetic recombination and DNA repair. Endonuclease that resolves HJ intermediates. Cleaves cruciform DNA by making single-stranded nicks across the HJ at symmetrical positions within the homologous arms, yielding a 5'-phosphate and a 3'-hydroxyl group; requires a central core of homology in the junction. The consensus cleavage sequence is 5'-(A/T)TT(C/G)-3'. Cleavage occurs on the 3'-side of the TT dinucleotide at the point of strand exchange. HJ branch migration catalyzed by RuvA-RuvB allows RuvC to scan DNA until it finds its consensus sequence, where it cleaves and resolves the cruciform DNA. In Campylobacter jejuni subsp. jejuni serotype O:23/36 (strain 81-176), this protein is Crossover junction endodeoxyribonuclease RuvC.